Reading from the N-terminus, the 391-residue chain is ETS-related transcription factor Elf-3 (391 aa).

Residues 65–151 enclose the PNT domain; sequence DPLAVLHLAE…AQLRDLTSNS (87 aa). Residues 200 to 271 are disordered; it reads YCSTYGPGAP…HGKRKRGRPR (72 aa). The span at 211–229 shows a compositional bias: polar residues; it reads PGSSDVSTARTATPQSSHA. Basic and acidic residues predominate over residues 242 to 261; sequence TESKVFPRDGFPDYKKGEPK. Positions 262–271 are enriched in basic residues; the sequence is HGKRKRGRPR. Positions 293–375 form a DNA-binding region, ETS; it reads THLWEFIRDI…DGRRLVYKFG (83 aa).

The protein belongs to the ETS family. Interacts with TBP. Interacts with CREBBP and EP300; these act as transcriptional coactivators of ELF3 and positively modulate its function. Interacts with XRCC5/KU86 and XRCC6/KU70; these inhibit the ability of ELF3 to bind DNA and negatively modulate its transcriptional activity. Associated with CLND7 and POU2F3. Interacts with ZNF768. In terms of tissue distribution, expressed in small intestine, colon, lung, kidney and uterus. Also expressed in the corneal epithelium and conjunctiva of the developing and adult eye. Not detected in liver, spleen, thymus, brain, heart, skeletal muscle or ovary.

It localises to the cytoplasm. The protein resides in the nucleus. Transcriptional activator that binds and transactivates ETS sequences containing the consensus nucleotide core sequence GGA[AT]. Acts synergistically with POU2F3 to transactivate the SPRR2A promoter and with RUNX1 to transactivate the ANGPT1 promoter. Also transactivates collagenase, CCL20, CLND7, FLG, KRT8, NOS2, PTGS2, SPRR2B, TGFBR2 and TGM3 promoters. Represses KRT4 promoter activity. Involved in mediating vascular inflammation. May play an important role in epithelial cell differentiation and tumorigenesis. May be a critical downstream effector of the ERBB2 signaling pathway. May be associated with mammary gland development and involution. Plays an important role in the regulation of transcription with TATA-less promoters in preimplantation embryos, which is essential in preimplantation development. In Mus musculus (Mouse), this protein is ETS-related transcription factor Elf-3.